Here is a 113-residue protein sequence, read N- to C-terminus: Ig kappa chain V-II region 26-10 (113 aa).

Residues 1 to 23 (DVVMTQTPLSLPVSLGDQASISC) are framework-1. Cysteines 23 and 93 form a disulfide. The segment at 24–39 (RSSQSLVHSNGNTYLN) is complementarity-determining-1. The interval 40 to 54 (WYLQKAGQSPKLLIY) is framework-2. Positions 55 to 61 (KVSNRFS) are complementarity-determining-2. The interval 62 to 93 (GVPDRFSGSGSGTDFTLKISRVEAEDLGIYFC) is framework-3. Positions 94–102 (SQTTHVPPT) are complementarity-determining-3. Residues 103–112 (FGGGTKLEIK) form a framework-4 region.

The polypeptide is Ig kappa chain V-II region 26-10 (Mus musculus (Mouse)).